A 202-amino-acid chain; its full sequence is Mitochondrial import receptor subunit TOM20-3 (202 aa).

Methionine 1 is modified (N-acetylmethionine). Residues 1–174 (MDTETEFDRI…NKKSSDAKYD (174 aa)) lie on the Cytoplasmic side of the membrane. 2 TPR repeats span residues 38-74 (GGVL…DPKK) and 86-119 (TSFA…QPDN). A disordered region spans residues 146–166 (SQPMGRVEAPAPPSSKAVKNK). A helical transmembrane segment spans residues 175 to 192 (AMGWVILAIGVVAWISFA). Over 193-202 (KANVPVSPPR) the chain is Mitochondrial intermembrane.

It belongs to the Tom20 family. In terms of assembly, forms part of the preprotein translocase complex of the outer mitochondrial membrane (TOM complex) which consists of at least 6 different proteins (TOM5, TOM6, TOM7, TOM20, TOM22/TOM9 and TOM40). Component of a mitochondrial large protein complex that contains, at least, MIC60, DGS1, TOM40, TOM20 proteins, and petC/RISP. In terms of processing, the N-terminus is blocked. Expressed in roots, flowers, young cotyledons and leaves.

It localises to the mitochondrion outer membrane. Its function is as follows. Central component of the receptor complex responsible for the recognition and translocation of cytosolically synthesized mitochondrial preproteins. Together with TOM22 functions as the transit peptide receptor at the surface of the mitochondrion outer membrane and facilitates the movement of preproteins into the translocation pore. This Arabidopsis thaliana (Mouse-ear cress) protein is Mitochondrial import receptor subunit TOM20-3.